We begin with the raw amino-acid sequence, 162 residues long: NADH-quinone oxidoreductase subunit I (162 aa).

2 4Fe-4S ferredoxin-type domains span residues 53 to 83 (LRRY…IDSA) and 93 to 122 (TRYD…ETHI). Positions 63, 66, 69, 73, 102, 105, 108, and 112 each coordinate [4Fe-4S] cluster.

Belongs to the complex I 23 kDa subunit family. In terms of assembly, NDH-1 is composed of 14 different subunits. Subunits NuoA, H, J, K, L, M, N constitute the membrane sector of the complex. [4Fe-4S] cluster serves as cofactor.

It localises to the cell inner membrane. The catalysed reaction is a quinone + NADH + 5 H(+)(in) = a quinol + NAD(+) + 4 H(+)(out). NDH-1 shuttles electrons from NADH, via FMN and iron-sulfur (Fe-S) centers, to quinones in the respiratory chain. The immediate electron acceptor for the enzyme in this species is believed to be ubiquinone. Couples the redox reaction to proton translocation (for every two electrons transferred, four hydrogen ions are translocated across the cytoplasmic membrane), and thus conserves the redox energy in a proton gradient. The chain is NADH-quinone oxidoreductase subunit I from Xanthomonas axonopodis pv. citri (strain 306).